A 156-amino-acid chain; its full sequence is Small ribosomal subunit protein uS7 (156 aa).

It belongs to the universal ribosomal protein uS7 family. As to quaternary structure, part of the 30S ribosomal subunit. Contacts proteins S9 and S11.

Its function is as follows. One of the primary rRNA binding proteins, it binds directly to 16S rRNA where it nucleates assembly of the head domain of the 30S subunit. Is located at the subunit interface close to the decoding center, probably blocks exit of the E-site tRNA. In Prochlorococcus marinus (strain MIT 9312), this protein is Small ribosomal subunit protein uS7.